The primary structure comprises 201 residues: Recombination protein RecR (201 aa).

The C4-type zinc finger occupies 57–72; it reads CADCRTFTEQEVCNIC. Positions 81–176 constitute a Toprim domain; that stretch reads GQICVVESPA…DASRIAHGVP (96 aa).

Belongs to the RecR family.

May play a role in DNA repair. It seems to be involved in an RecBC-independent recombinational process of DNA repair. It may act with RecF and RecO. This is Recombination protein RecR from Klebsiella pneumoniae subsp. pneumoniae (strain ATCC 700721 / MGH 78578).